We begin with the raw amino-acid sequence, 488 residues long: MGNMNEAIQITDAKKRYSAGVLKYAQMGYWDGDYVPKDTDILALFRITPQEGVDAIEAAAAVAGESSTATWTVVWTDRLTACDMYRAKAYKVEPVPNNPGQYFCYVAYDLSLFEEGSITNVTASIIGNVFSFKPLKAARLEDMKFPVAYVKTFPGPPTGIVVERERLDKFGRPLLGATTKPKLGLSGRNYGRVVYEGLRGGLDFMKDDENINSQPFMHWRDRFLFVMDAVNKASAATGEVKGSYLNVTAGTMEEMYRRAQFAKELGSVIVMVDLVIGYTAIQSMSNWCRQNDMILHLHRAGHGTYTRQKNHGVSFRVIAKWMRLAGVDHIHAGTAVGKLEGDPMTVQGYYNVCRDTHTKVDLPRGIYFDQDWGALRKVMPVASGGIHAGQMHQLLDLFGDDVVLQFGGGTIGHPQGIQAGATANRVALEAMVLARNEGRDIANEGPQILRDAAKWCTPLAAALDTWGEISFNYASTDTSDYVPTPSVA.

Substrate contacts are provided by Asn-128 and Thr-178. The active-site Proton acceptor is the Lys-180. Lys-182 serves as a coordination point for substrate. 3 residues coordinate Mg(2+): Lys-206, Asp-208, and Glu-209. Lys-206 is subject to N6-carboxylysine. The active-site Proton acceptor is the His-298. The substrate site is built by Arg-299, His-331, and Ser-383.

The protein belongs to the RuBisCO large chain family. Type I subfamily. Heterohexadecamer of 8 large chains and 8 small chains. Mg(2+) serves as cofactor.

It carries out the reaction 2 (2R)-3-phosphoglycerate + 2 H(+) = D-ribulose 1,5-bisphosphate + CO2 + H2O. The enzyme catalyses D-ribulose 1,5-bisphosphate + O2 = 2-phosphoglycolate + (2R)-3-phosphoglycerate + 2 H(+). In terms of biological role, ruBisCO catalyzes two reactions: the carboxylation of D-ribulose 1,5-bisphosphate, the primary event in carbon dioxide fixation, as well as the oxidative fragmentation of the pentose substrate. Both reactions occur simultaneously and in competition at the same active site. The protein is Ribulose bisphosphate carboxylase large chain of Variovorax paradoxus (strain S110).